A 161-amino-acid polypeptide reads, in one-letter code: MPKVAVGGTFQYFHDGHAKLIEKAFEIAEDGKVHIGLTSDEMLSKSHSVDNYEKRRNWLLQYIKEMGIPDDRYEITKLNDPYGPALEEDFDYIIVSPETYPVALKMNRIREEKGKKLLEIVYVEYVMAEDGIPISSTRIAKGEIDRHGRLKKNIKHCNTKN.

This sequence belongs to the eukaryotic CoaD family.

It localises to the cytoplasm. The catalysed reaction is (R)-4'-phosphopantetheine + ATP + H(+) = 3'-dephospho-CoA + diphosphate. The protein operates within cofactor biosynthesis; coenzyme A biosynthesis. In terms of biological role, reversibly transfers an adenylyl group from ATP to 4'-phosphopantetheine, yielding dephospho-CoA (dPCoA) and pyrophosphate. The polypeptide is Phosphopantetheine adenylyltransferase (Methanosarcina barkeri (strain Fusaro / DSM 804)).